The primary structure comprises 170 residues: Peptide deformylase (170 aa).

Residues C91 and H133 each contribute to the Fe cation site. The active site involves E134. H137 contacts Fe cation.

Belongs to the polypeptide deformylase family. Requires Fe(2+) as cofactor.

The catalysed reaction is N-terminal N-formyl-L-methionyl-[peptide] + H2O = N-terminal L-methionyl-[peptide] + formate. Removes the formyl group from the N-terminal Met of newly synthesized proteins. Requires at least a dipeptide for an efficient rate of reaction. N-terminal L-methionine is a prerequisite for activity but the enzyme has broad specificity at other positions. The sequence is that of Peptide deformylase from Histophilus somni (strain 129Pt) (Haemophilus somnus).